The primary structure comprises 481 residues: Trigger factor (481 aa).

The 88-residue stretch at 174–261 (GDIAVVSFKG…LKDLKEKELP (88 aa)) folds into the PPIase FKBP-type domain. Residues 435–481 (VKEKTTKASQASKTTKAKKTTTKTTKATKTATKTTKATKTQNKKEKK) form a disordered region. A compositionally biased stretch (low complexity) spans 456–474 (TKTTKATKTATKTTKATKT).

Belongs to the FKBP-type PPIase family. Tig subfamily.

Its subcellular location is the cytoplasm. The enzyme catalyses [protein]-peptidylproline (omega=180) = [protein]-peptidylproline (omega=0). Involved in protein export. Acts as a chaperone by maintaining the newly synthesized protein in an open conformation. Functions as a peptidyl-prolyl cis-trans isomerase. The protein is Trigger factor of Prochlorococcus marinus (strain MIT 9312).